The following is a 457-amino-acid chain: Argininosuccinate lyase (457 aa).

Belongs to the lyase 1 family. Argininosuccinate lyase subfamily.

It localises to the cytoplasm. It carries out the reaction 2-(N(omega)-L-arginino)succinate = fumarate + L-arginine. It functions in the pathway amino-acid biosynthesis; L-arginine biosynthesis; L-arginine from L-ornithine and carbamoyl phosphate: step 3/3. This is Argininosuccinate lyase from Psychrobacter arcticus (strain DSM 17307 / VKM B-2377 / 273-4).